The following is a 682-amino-acid chain: UvrABC system protein B (682 aa).

Positions 27–414 (DNIRAGVAHQ…SEGIVVEQII (388 aa)) constitute a Helicase ATP-binding domain. 40-47 (GVTGSGKT) is an ATP binding site. A Beta-hairpin motif is present at residues 93 to 116 (YYDYYQPEAYVPTSDTYIEKDSSI). One can recognise a Helicase C-terminal domain in the interval 432 to 594 (QMEDLMTECR…IEPVSVRKSL (163 aa)). A disordered region spans residues 609 to 628 (AAKGRGKGRGRQAAPAQTAA). One can recognise a UVR domain in the interval 642–677 (GGLIQRLEREMRESARDLEFEKAAELRDRIRMLRER).

Belongs to the UvrB family. In terms of assembly, forms a heterotetramer with UvrA during the search for lesions. Interacts with UvrC in an incision complex.

The protein resides in the cytoplasm. The UvrABC repair system catalyzes the recognition and processing of DNA lesions. A damage recognition complex composed of 2 UvrA and 2 UvrB subunits scans DNA for abnormalities. Upon binding of the UvrA(2)B(2) complex to a putative damaged site, the DNA wraps around one UvrB monomer. DNA wrap is dependent on ATP binding by UvrB and probably causes local melting of the DNA helix, facilitating insertion of UvrB beta-hairpin between the DNA strands. Then UvrB probes one DNA strand for the presence of a lesion. If a lesion is found the UvrA subunits dissociate and the UvrB-DNA preincision complex is formed. This complex is subsequently bound by UvrC and the second UvrB is released. If no lesion is found, the DNA wraps around the other UvrB subunit that will check the other stand for damage. The chain is UvrABC system protein B from Oleidesulfovibrio alaskensis (strain ATCC BAA-1058 / DSM 17464 / G20) (Desulfovibrio alaskensis).